The primary structure comprises 311 residues: Cytosolic Fe-S cluster assembly factor Nubp1 homolog (311 aa).

Positions 1–20 (MQAPPPEHCPGVESENAGKG) are disordered. The [4Fe-4S] cluster site is built by Cys-9, Cys-23, Cys-26, and Cys-32. 63-70 (GKGGVGKS) lines the ATP pocket. Residues Cys-240 and Cys-243 each coordinate [4Fe-4S] cluster.

The protein belongs to the Mrp/NBP35 ATP-binding proteins family. NUBP1/NBP35 subfamily. In terms of assembly, heterotetramer of 2 Nubp1 and 2 Nubp2 chains. The cofactor is [4Fe-4S] cluster.

It is found in the cytoplasm. In terms of biological role, component of the cytosolic iron-sulfur (Fe/S) protein assembly (CIA) machinery. Required for maturation of extramitochondrial Fe-S proteins. The Nubp1-Nubp2 heterotetramer forms a Fe-S scaffold complex, mediating the de novo assembly of an Fe-S cluster and its transfer to target apoproteins. The protein is Cytosolic Fe-S cluster assembly factor Nubp1 homolog of Drosophila simulans (Fruit fly).